Reading from the N-terminus, the 957-residue chain is Protein translocase subunit SecA (957 aa).

Residues Gln-87, 105 to 109 (GEGKT), and Asp-512 contribute to the ATP site. Residues 924-957 (AAPAQAPSKSKRSAGRNDPCPCGSGQKYKKCCGK) form a disordered region. Cys-943, Cys-945, Cys-954, and Cys-955 together coordinate Zn(2+).

The protein belongs to the SecA family. As to quaternary structure, monomer and homodimer. Part of the essential Sec protein translocation apparatus which comprises SecA, SecYEG and auxiliary proteins SecDF-YajC and YidC. Zn(2+) serves as cofactor.

Its subcellular location is the cell inner membrane. It is found in the cytoplasm. The catalysed reaction is ATP + H2O + cellular proteinSide 1 = ADP + phosphate + cellular proteinSide 2.. In terms of biological role, part of the Sec protein translocase complex. Interacts with the SecYEG preprotein conducting channel. Has a central role in coupling the hydrolysis of ATP to the transfer of proteins into and across the cell membrane, serving as an ATP-driven molecular motor driving the stepwise translocation of polypeptide chains across the membrane. This is Protein translocase subunit SecA from Geobacter sp. (strain M21).